Consider the following 125-residue polypeptide: Ribosome-binding factor A (125 aa).

The protein belongs to the RbfA family. Monomer. Binds 30S ribosomal subunits, but not 50S ribosomal subunits or 70S ribosomes.

Its subcellular location is the cytoplasm. Functionally, one of several proteins that assist in the late maturation steps of the functional core of the 30S ribosomal subunit. Associates with free 30S ribosomal subunits (but not with 30S subunits that are part of 70S ribosomes or polysomes). Required for efficient processing of 16S rRNA. May interact with the 5'-terminal helix region of 16S rRNA. This is Ribosome-binding factor A from Wigglesworthia glossinidia brevipalpis.